The primary structure comprises 118 residues: Large ribosomal subunit protein uL24 (118 aa).

It belongs to the universal ribosomal protein uL24 family. Part of the 50S ribosomal subunit.

Its function is as follows. One of two assembly initiator proteins, it binds directly to the 5'-end of the 23S rRNA, where it nucleates assembly of the 50S subunit. In terms of biological role, one of the proteins that surrounds the polypeptide exit tunnel on the outside of the subunit. The polypeptide is Large ribosomal subunit protein uL24 (Prochlorococcus marinus (strain NATL2A)).